A 583-amino-acid chain; its full sequence is Inactive carboxylesterase-like protein VdtD (583 aa).

Residues 1–23 form the signal peptide; sequence MFMTQIVFGIAPTLLKTFSHLTA. 9 N-linked (GlcNAc...) asparagine glycosylation sites follow: N84, N109, N221, N265, N307, N350, N388, N448, and N468.

The protein belongs to the type-B carboxylesterase/lipase family.

The protein operates within secondary metabolite biosynthesis. Functionally, inactive carboxylesterase-like protein; part of the gene cluster that mediates the biosynthesis of viriditoxin, one of the 'classical' secondary metabolites produced by fungi and that has antibacterial activity. The first step is performed by the polyketide synthase VdtA which condenses one acetyl-CoA and 6 malonyl-CoA units to form the heptaketide monomer backbone of viriditoxin. The product of VdtA is then O-methylated on C7 by the O-methyltransferase VdtC. The O-methyl group is important for the stereoselective coupling of the monomers at the final step of viriditoxin biosynthesis. The short-chain dehydrogenase/reductase VdtF then acts as a stereospecific reductase converting the pyrone to dihydropyrone via the reduction of the C3-C4 double bond. The FAD-binding monooxygenase VdtE then converts the ketone group into a methyl-ester group to yield semi-viriditoxin. Finally, the laccase VdtB is involved in dimerization of 2 semi-viriditoxin molecules to yield the final viriditoxin. VdtB is responsible for the regioselective 6,6'-coupling of semi-viriditoxin, which yields (M)-viriditoxin and (P)-viriditoxin at a ratio of 1:2. The non-catalytic carboxylesterase-like protein VdtD affects the stereochemistical outcome of the coupling. The highly reducing polyketide synthase VdtX is not involved in viriditoxin synthesis, but might possibly play a role in the production of additional metabolites not identified yet. The polypeptide is Inactive carboxylesterase-like protein VdtD (Byssochlamys spectabilis (Paecilomyces variotii)).